The following is a 65-amino-acid chain: MKVKELRDLTDAELAKKIDDSKDELFKLRFQLATGQLDNPMKIKDVKRNIARLKTIETERKLGIR.

This sequence belongs to the universal ribosomal protein uL29 family.

This is Large ribosomal subunit protein uL29 from Desulforamulus reducens (strain ATCC BAA-1160 / DSM 100696 / MI-1) (Desulfotomaculum reducens).